The primary structure comprises 562 residues: SLAIN motif-containing protein-like (562 aa).

3 disordered regions span residues 292 to 313 (QDYASSSASVSRRSSSASLHSL), 344 to 381 (HRYSPSPLSSPRCQSPSAAESRATTSRIRPPRRSIQNH), and 409 to 562 (SLEA…DGCY). Composition is skewed to low complexity over residues 295-311 (ASSSASVSRRSSSASLH) and 345-355 (RYSPSPLSSPR). Composition is skewed to polar residues over residues 356 to 370 (CQSPSAAESRATTSR), 424 to 442 (QGPSSRLTRMQQPSTSTPP), 465 to 531 (VSTS…STVP), and 539 to 553 (SRRSLPSAKMNSTLG).

This sequence belongs to the SLAIN motif-containing family.

In Xenopus laevis (African clawed frog), this protein is SLAIN motif-containing protein-like.